The sequence spans 319 residues: HTH-type transcriptional regulator YidZ (319 aa).

The 58-residue stretch at 8 to 65 (LDLNLLLCLQLLMQERSVTKAAKRMNVTPSAVSKSLAKLRAWFDDPLFVNTPLGLAPT) folds into the HTH lysR-type domain. The H-T-H motif DNA-binding region spans 25–44 (VTKAAKRMNVTPSAVSKSLA).

Belongs to the LysR transcriptional regulatory family.

Functionally, involved in anaerobic NO protection. The chain is HTH-type transcriptional regulator YidZ from Salmonella typhi.